Here is a 652-residue protein sequence, read N- to C-terminus: MSSEQPAWTFGLFTPDQNKQAPLEMNENAINSLYEAIPLPQDGSSNGQRQEDRQANSFELKRETLVATDPPRPTINLDPRVSIYSGRRPLLSRTNIQGRVYNFLERPTGWKCFVYHFTVFLIVLICLIFSVLSTIQQYNNLATETLFWMEIVLVVFFGAEYVVRLWSAGCRSKYVGVWGRLRFARKPISVIDLIVVVASVIVLCVGSNGQVFATSAIRGIRFLQILRMLHVDRQGGTWRLLGSVVFIHRQELITTLYIGFLGLIFSSYFVYLAEKDAIDSSGEYQFGSYADALWWGVVTVTTIGYGDKVPQTWIGKTIASCFSVFAISFFALPAGILGSGFALKVQQKQRQKHFNRQIPAAASLIQTAWRCYAAENPDSATWKIYIRKQSRNHHLMSPSPKPKKSAMVKKKKIRTERDEGSTDKMLNIPHITYDHVADDRKNDGYSVESYENTVRKPFGFLDPSTGPFIRTSSFTDDLDMEGDTLLTPITHISELKEHHRAAIKVIRRMQYFVAKKKFQQARKPYDVRDVIEQYSQGHLNLMVRIKELQRRLDQSLGKPSLFLSVSDKVKDKGINTIGSRLNRVEDKVTQMDHKLNLITDMLHHLLTNQQGSQSIRTPHRSNSLNSENHPSRNTLPTYEQLNVPRMTQDNIS.

Residues M1–W110 are Cytoplasmic-facing. Residues K111–L132 traverse the membrane as a helical segment. At S133–T143 the chain is on the extracellular side. A helical membrane pass occupies residues E144–W166. Residues S167–R182 lie on the Cytoplasmic side of the membrane. Residues F183–N208 traverse the membrane as a helical segment. Residues G209 to A216 lie on the Extracellular side of the membrane. A helical; Voltage-sensor transmembrane segment spans residues I217–D232. The tract at residues M228–G236 is interaction with KCNE3. The Cytoplasmic segment spans residues R233–Q250. Position 234 (Q234) interacts with a 1,2-diacyl-sn-glycero-3-phospho-(1D-myo-inositol-4,5-bisphosphate). A helical transmembrane segment spans residues E251–A273. Topologically, residues E274 to Y289 are extracellular. Residues A290–P310 constitute an intramembrane region (pore-forming). The Extracellular portion of the chain corresponds to Q311–T312. Residues W313–G338 traverse the membrane as a helical segment. Residues S339–S652 lie on the Cytoplasmic side of the membrane. The interaction with CALM stretch occupies residues A360–Y372. Residues H393–E419 form a disordered region. The span at K401 to R414 shows a compositional bias: basic residues. Residues K504–F518 are interaction with CALM; calcium-dependent. Residues P524–L561 are interaction with KCNE1 C-terminus. An interaction with AKAP9 region spans residues I577–L605. The segment at G578–Q609 is C-terminal assembly domain (tetramerization). The interval Q609–S652 is disordered.

Belongs to the potassium channel family. KQT (TC 1.A.1.15) subfamily. Kv7.1/KCNQ1 sub-subfamily. In terms of assembly, tetramer. Heterotetramer with KCNE1; targets to the membrane raft. Interacts (via C-terminus) with CALM; forms a heterotetramer in a calcium-independent manner. Interacts with KCNE2; form a heterooligomer complex that targets to the membrane raft and leading to currents with an apparently instantaneous activation, a rapid deactivation process and a linear current-voltage relationship and decreases the amplitude of the outward current. Interacts with KCNE3; four KCNE3 molecules are bound to one KCNQ1 tetramer (4:4 KCNQ1:KCNE3 stoichiometry); alters membrane raft localization; affects KCNQ1 structure and gating properties. Interacts with KCNE4; impairs KCNQ1 localization in lipid rafts and inhibits voltage-gated potassium channel activity. Interacts with KCNE5; impairs KCNQ1 localization in lipid rafts and only conducts current upon strong and continued depolarization.

The protein resides in the cell membrane. It is found in the cytoplasmic vesicle membrane. It localises to the membrane raft. The protein localises to the endoplasmic reticulum. Its subcellular location is the basolateral cell membrane. It catalyses the reaction K(+)(in) = K(+)(out). PIP2 molecule is essential to activate KCNQ channels by inducing the coupling of the voltage-sensing domain (VSD) and the pore-forming domain (PD). Upon channel activation, PIP2 disrupts the VSD-calmodulin/CALM interactions, causing the release of CALM from the VSD which triggers the opening of the gate. Calcium potentiates KCNQ1 channel current through calcium-bound CALM. Calcium-bound CALM competes with PIP2 to stabilize the channel open state. Pore-forming subunit of the voltage-gated potassium (Kv) channel involved in the regulation of cardiomyocyte excitability and important in normal development and functions of myocardium, inner ear, stomach and colon. Associates with KCNE beta subunits that modulates current kinetics. Induces a voltage-dependent by rapidly activating and slowly deactivating potassium-selective outward current. Also promotes a delayed voltage activated potassium current showing outward rectification characteristic. During beta-adrenergic receptor stimulation participates in cardiac repolarization by associating with KCNE1 to form the I(Ks) cardiac potassium current that increases the amplitude and slows down the activation kinetics of outward potassium current I(Ks). When associated with KCNE3, forms the potassium channel that is important for cyclic AMP-stimulated intestinal secretion of chloride ions. When associated with KCNE2, forms a heterooligomer complex leading to currents with an apparently instantaneous activation, a rapid deactivation process and a linear current-voltage relationship and decreases the amplitude of the outward current. When associated with KCNE4, inhibits voltage-gated potassium channel activity. When associated with KCNE5, this complex only conducts current upon strong and continued depolarization. This Xenopus laevis (African clawed frog) protein is Potassium voltage-gated channel subfamily KQT member 1.